We begin with the raw amino-acid sequence, 169 residues long: Chorion protein E1 (169 aa).

Positions M1–A19 are cleaved as a signal peptide. 2 Tetradecapeptide repeats span residues G114–S127 and G128–S141. The interval A119–S169 is disordered. The segment covering T142 to A152 has biased composition (polar residues).

Functionally, this protein is one of two components of the prominent 'filler' that helps mold the shape of aeropyle crowns. In Antheraea polyphemus (Polyphemus moth), this protein is Chorion protein E1.